The chain runs to 149 residues: Secreted RxLR effector protein 47 (149 aa).

A signal peptide spans 1–22 (MICLLPLIAVMLFVFATHTVLA). Positions 57 to 79 (RFLRQETTFEEKPSVNDVHAEER) match the RxLR-dEER motif.

It belongs to the RxLR effector family.

The protein localises to the secreted. Its subcellular location is the host membrane. Functionally, secreted effector that completely suppresses the host cell death induced by cell death-inducing proteins. The chain is Secreted RxLR effector protein 47 from Plasmopara viticola (Downy mildew of grapevine).